The primary structure comprises 353 residues: UDP-N-acetylglucosamine--N-acetylmuramyl-(pentapeptide) pyrophosphoryl-undecaprenol N-acetylglucosamine transferase (353 aa).

Residues 10–12 (TGG), asparagine 124, serine 183, and glutamine 283 each bind UDP-N-acetyl-alpha-D-glucosamine.

This sequence belongs to the glycosyltransferase 28 family. MurG subfamily.

Its subcellular location is the cell inner membrane. The enzyme catalyses di-trans,octa-cis-undecaprenyl diphospho-N-acetyl-alpha-D-muramoyl-L-alanyl-D-glutamyl-meso-2,6-diaminopimeloyl-D-alanyl-D-alanine + UDP-N-acetyl-alpha-D-glucosamine = di-trans,octa-cis-undecaprenyl diphospho-[N-acetyl-alpha-D-glucosaminyl-(1-&gt;4)]-N-acetyl-alpha-D-muramoyl-L-alanyl-D-glutamyl-meso-2,6-diaminopimeloyl-D-alanyl-D-alanine + UDP + H(+). It functions in the pathway cell wall biogenesis; peptidoglycan biosynthesis. In terms of biological role, cell wall formation. Catalyzes the transfer of a GlcNAc subunit on undecaprenyl-pyrophosphoryl-MurNAc-pentapeptide (lipid intermediate I) to form undecaprenyl-pyrophosphoryl-MurNAc-(pentapeptide)GlcNAc (lipid intermediate II). This is UDP-N-acetylglucosamine--N-acetylmuramyl-(pentapeptide) pyrophosphoryl-undecaprenol N-acetylglucosamine transferase from Helicobacter pylori (strain ATCC 700392 / 26695) (Campylobacter pylori).